Consider the following 289-residue polypeptide: Zinc finger matrin-type protein 3 (289 aa).

Positions 1 to 42 (MILLQHAVLPPPKQPSPSPPMSVATRSTGTLQLPPQKPFGQE) are disordered. A compositionally biased stretch (pro residues) spans 9-20 (LPPPKQPSPSPP). The span at 24-33 (ATRSTGTLQL) shows a compositional bias: polar residues. Matrin-type zinc fingers lie at residues 70-100 (LYCK…KLRN) and 147-177 (DYCK…RLRL). A compositionally biased stretch (polar residues) spans 180–191 (AQSNSFSESSEL). The tract at residues 180–201 (AQSNSFSESSELGQRRARKEGN) is disordered. The Matrin-type 3 zinc finger occupies 246 to 276 (FYCSMCNVGAGEEMEFRQHLESKQHKSKVSE).

In terms of assembly, interacts with dsRNA. In terms of tissue distribution, highly expressed in adult brain, and moderately in adult kidney and testis. Not detected in fetal brain, heart, pancreas, adrenal gland, liver or small intestine.

The protein localises to the nucleus. It is found in the nucleolus. In terms of biological role, acts as a bona fide target gene of p53/TP53. May play a role in the TP53-dependent growth regulatory pathway. May contribute to TP53-mediated apoptosis by regulation of TP53 expression and translocation to the nucleus and nucleolus. The polypeptide is Zinc finger matrin-type protein 3 (Homo sapiens (Human)).